The primary structure comprises 274 residues: Hydroxyethylthiazole kinase (274 aa).

Position 51 (methionine 51) interacts with substrate. Residues arginine 127 and serine 173 each contribute to the ATP site. Residue glycine 200 participates in substrate binding.

This sequence belongs to the Thz kinase family. Requires Mg(2+) as cofactor.

The enzyme catalyses 5-(2-hydroxyethyl)-4-methylthiazole + ATP = 4-methyl-5-(2-phosphooxyethyl)-thiazole + ADP + H(+). Its pathway is cofactor biosynthesis; thiamine diphosphate biosynthesis; 4-methyl-5-(2-phosphoethyl)-thiazole from 5-(2-hydroxyethyl)-4-methylthiazole: step 1/1. Functionally, catalyzes the phosphorylation of the hydroxyl group of 4-methyl-5-beta-hydroxyethylthiazole (THZ). The chain is Hydroxyethylthiazole kinase from Photobacterium profundum (strain SS9).